The sequence spans 460 residues: Phosphoglucomutase (460 aa).

Ser103 serves as the catalytic Phosphoserine intermediate. Ser103 contributes to the Mg(2+) binding site. Substrate-binding positions include 103–104 (SH) and Lys113. Asp239, Asp241, and Asp243 together coordinate Mg(2+). Residues 243-244 (DR), Thr303, and 322-324 (EMS) contribute to the substrate site.

It belongs to the phosphohexose mutase family. Mg(2+) serves as cofactor.

The protein resides in the cytoplasm. The catalysed reaction is alpha-D-glucose 1-phosphate = alpha-D-glucose 6-phosphate. Its function is as follows. This enzyme participates in both the breakdown and synthesis of glucose. The sequence is that of Phosphoglucomutase (pgm) from Neisseria gonorrhoeae.